Here is a 667-residue protein sequence, read N- to C-terminus: DNA ligase (667 aa).

NAD(+) is bound by residues 30-34 (DSEYD), 79-80 (SL), and E112. K114 serves as the catalytic N6-AMP-lysine intermediate. 4 residues coordinate NAD(+): R135, E172, K289, and K313. Positions 407, 410, 425, and 431 each coordinate Zn(2+). Residues 590–667 (VRDNPLKGKT…SENEFLALLA (78 aa)) enclose the BRCT domain.

The protein belongs to the NAD-dependent DNA ligase family. LigA subfamily. Mg(2+) is required as a cofactor. Mn(2+) serves as cofactor.

The catalysed reaction is NAD(+) + (deoxyribonucleotide)n-3'-hydroxyl + 5'-phospho-(deoxyribonucleotide)m = (deoxyribonucleotide)n+m + AMP + beta-nicotinamide D-nucleotide.. Functionally, DNA ligase that catalyzes the formation of phosphodiester linkages between 5'-phosphoryl and 3'-hydroxyl groups in double-stranded DNA using NAD as a coenzyme and as the energy source for the reaction. It is essential for DNA replication and repair of damaged DNA. This is DNA ligase from Histophilus somni (strain 2336) (Haemophilus somnus).